The sequence spans 679 residues: DNA-directed RNA polymerase subunit beta' (679 aa).

Positions 69, 71, 87, and 90 each coordinate Zn(2+). D489, D491, and D493 together coordinate Mg(2+).

This sequence belongs to the RNA polymerase beta' chain family. RpoC1 subfamily. In terms of assembly, in plastids the minimal PEP RNA polymerase catalytic core is composed of four subunits: alpha, beta, beta', and beta''. When a (nuclear-encoded) sigma factor is associated with the core the holoenzyme is formed, which can initiate transcription. The cofactor is Mg(2+). It depends on Zn(2+) as a cofactor.

The protein localises to the plastid. It is found in the chloroplast. The enzyme catalyses RNA(n) + a ribonucleoside 5'-triphosphate = RNA(n+1) + diphosphate. Functionally, DNA-dependent RNA polymerase catalyzes the transcription of DNA into RNA using the four ribonucleoside triphosphates as substrates. In Oenothera argillicola (Appalachian evening primrose), this protein is DNA-directed RNA polymerase subunit beta'.